An 878-amino-acid chain; its full sequence is MEIRKKPNIFTVLVIDFSSKPSMALLLAILLFLSGPSASAVAAAAVGPATGFKPADDILIDCGSKSSSKTPDGRVFKSDQETIQYIEAKEDIQVSAPPSDKVASPIYLTARIFREEATYKFHLTRPGWHWVRLHFLAFPNDKFDLQQATFSVLTEKYVLLHNFKISNNNNDSQAAVQKEYLVNMTDAQFALRFRPMKSSAAFINAIEVVSAPDELISDSGTALFPVIGFSGLSDYAYQSVYRVNVGGPLIMPQNDTLGRTWIPDKEFLKDENLAKDVKTTPSAIKYPPEVTPLIAPQTVYATAVEMANSLTIDPNFNVSWNFPSNPSFNYLIRLHFCDIVSKSLNDLYFNVYINGKTAISGLDLSTVAGNLAAPYYKDIVVNATLMGPELQVQIGPMGEDTGTKNAILNGVEVLKMSNSVNSLDGEFGVDGRTTGMGKHGMVATAGFVMMFGAFIGLGAMVYKWKKRPQDWQKRNSFSSWLLPIHAGDSTFMTSKGGSQKSNFYNSTLGLGRYFSLSELQEATKNFEASQIIGVGGFGNVYIGTLDDGTKVAVKRGNPQSEQGITEFQTEIQMLSKLRHRHLVSLIGYCDENSEMILVYEFMSNGPFRDHLYGKNLAPLTWKQRLEICIGSARGLHYLHTGTAQGIIHRDVKSTNILLDEALVAKVADFGLSKDVAFGQNHVSTAVKGSFGYLDPEYFRRQQLTDKSDVYSFGVVLLEALCARPAINPQLPREQVNLAEWAMQWKRKGLLEKIIDPHLAGTINPESMKKFAEAAEKCLEDYGVDRPTMGDVLWNLEYALQLQEAFTQGKAEETENAKPDVVTPGSVPVSDPSPITPSVTTNEAATVPVPAKVEENSGTAVDEHSGTAMFTQFANLNGR.

A signal peptide spans 1–43 (MEIRKKPNIFTVLVIDFSSKPSMALLLAILLFLSGPSASAVAA). Over 44–440 (AAVGPATGFK…GRTTGMGKHG (397 aa)) the chain is Extracellular. N-linked (GlcNAc...) asparagine glycans are attached at residues Asn-170, Asn-183, Asn-254, Asn-317, and Asn-382. The helical transmembrane segment at 441-461 (MVATAGFVMMFGAFIGLGAMV) threads the bilayer. The Cytoplasmic portion of the chain corresponds to 462–878 (YKWKKRPQDW…FTQFANLNGR (417 aa)). In terms of domain architecture, Protein kinase spans 526–798 (FEASQIIGVG…GDVLWNLEYA (273 aa)). Residues 532–540 (IGVGGFGNV) and Lys-554 contribute to the ATP site. Residue Asp-650 is the Proton acceptor of the active site. Residues 808–844 (GKAEETENAKPDVVTPGSVPVSDPSPITPSVTTNEAA) are disordered.

Belongs to the protein kinase superfamily. Ser/Thr protein kinase family.

Its subcellular location is the membrane. This chain is Probable receptor-like protein kinase At4g39110, found in Arabidopsis thaliana (Mouse-ear cress).